The sequence spans 142 residues: Large ribosomal subunit protein uL13 (142 aa).

The protein belongs to the universal ribosomal protein uL13 family. In terms of assembly, part of the 50S ribosomal subunit.

Its function is as follows. This protein is one of the early assembly proteins of the 50S ribosomal subunit, although it is not seen to bind rRNA by itself. It is important during the early stages of 50S assembly. This chain is Large ribosomal subunit protein uL13, found in Xylella fastidiosa (strain 9a5c).